The primary structure comprises 475 residues: Doublecortin domain-containing protein 2 (475 aa).

2 Doublecortin domains span residues 17 to 100 (KSVL…LNYL) and 139 to 221 (CTIF…LPYS). Residues 234–475 (YGQKASSLPP…EANKASSAVA (242 aa)) form a disordered region. Positions 252-272 (GSGNYRQSKSTIGSSDNSSPQ) are enriched in polar residues. S270 bears the Phosphoserine mark. A compositionally biased stretch (basic and acidic residues) spans 353–365 (EKTSKDANQKEDF). Residues 407–425 (TDEENGEELDQVAEELQPT) are compositionally biased toward acidic residues.

In terms of assembly, interacts with DVL1, DVL2 and DVL3. As to expression, expressed in hair cells of the inner ear.

It is found in the cell projection. The protein resides in the cilium. It localises to the cytoplasm. The protein localises to the cytoskeleton. Its subcellular location is the cilium axoneme. It is found in the kinocilium. Functionally, protein that plays a role in the inhibition of canonical Wnt signaling pathway. May be involved in neuronal migration during development of the cerebral neocortex. Involved in the control of ciliogenesis and ciliary length. This Mus musculus (Mouse) protein is Doublecortin domain-containing protein 2 (Dcdc2).